The primary structure comprises 295 residues: Uridine and thymidine phosphorylase (295 aa).

Residues Arg81 and 125-128 contribute to the phosphate site; that span reads RLGT. Positions 203 and 205 each coordinate substrate.

Belongs to the PNP/UDP phosphorylase family. As to expression, expressed in hypodermis, pharynx, spermatheca and gonad.

It carries out the reaction uridine + phosphate = alpha-D-ribose 1-phosphate + uracil. It catalyses the reaction thymidine + phosphate = 2-deoxy-alpha-D-ribose 1-phosphate + thymine. The enzyme catalyses 2'-deoxyuridine + phosphate = 2-deoxy-alpha-D-ribose 1-phosphate + uracil. It functions in the pathway pyrimidine metabolism; UMP biosynthesis via salvage pathway; uracil from uridine (phosphorylase route): step 1/1. Its pathway is pyrimidine metabolism; dTMP biosynthesis via salvage pathway; dTMP from thymine: step 1/2. In terms of biological role, catalyzes the reversible phosphorylytic cleavage of uridine and thymidine to uracil and ribose-phosphate or thymine and deoxyribose-1-phosphate. The produced molecules are then utilized as carbon and energy sources or in the rescue of pyrimidine bases for nucleotide synthesis. Required for normal lifespan. This chain is Uridine and thymidine phosphorylase, found in Caenorhabditis elegans.